The following is a 453-amino-acid chain: Pup--protein ligase (453 aa).

Glu-9 serves as a coordination point for Mg(2+). Arg-53 contacts ATP. Tyr-55 is a Mg(2+) binding site. Asp-57 acts as the Proton acceptor in catalysis. Residue Glu-63 participates in Mg(2+) binding. The ATP site is built by Thr-66 and Trp-420.

It belongs to the Pup ligase/Pup deamidase family. Pup-conjugating enzyme subfamily.

The enzyme catalyses ATP + [prokaryotic ubiquitin-like protein]-L-glutamate + [protein]-L-lysine = ADP + phosphate + N(6)-([prokaryotic ubiquitin-like protein]-gamma-L-glutamyl)-[protein]-L-lysine.. It participates in protein degradation; proteasomal Pup-dependent pathway. The protein operates within protein modification; protein pupylation. Catalyzes the covalent attachment of the prokaryotic ubiquitin-like protein modifier Pup to the proteasomal substrate proteins, thereby targeting them for proteasomal degradation. This tagging system is termed pupylation. The ligation reaction involves the side-chain carboxylate of the C-terminal glutamate of Pup and the side-chain amino group of a substrate lysine. In Streptomyces griseus subsp. griseus (strain JCM 4626 / CBS 651.72 / NBRC 13350 / KCC S-0626 / ISP 5235), this protein is Pup--protein ligase.